A 124-amino-acid chain; its full sequence is Fluoride-specific ion channel FluC (124 aa).

A run of 4 helical transmembrane segments spans residues 4–24 (VLFV…ISLL), 35–55 (FGTL…FALG), 62–82 (PEFK…FSTF), and 95–115 (LVKA…VVYL). Na(+) is bound by residues Gly74 and Thr77.

The protein belongs to the fluoride channel Fluc/FEX (TC 1.A.43) family.

The protein resides in the cell inner membrane. The catalysed reaction is fluoride(in) = fluoride(out). Its activity is regulated as follows. Na(+) is not transported, but it plays an essential structural role and its presence is essential for fluoride channel function. Fluoride-specific ion channel. Important for reducing fluoride concentration in the cell, thus reducing its toxicity. This chain is Fluoride-specific ion channel FluC, found in Shewanella pealeana (strain ATCC 700345 / ANG-SQ1).